The sequence spans 485 residues: Ribulose bisphosphate carboxylase large chain (485 aa).

The propeptide occupies 1–2 (MS). The residue at position 3 (Pro-3) is an N-acetylproline. The residue at position 14 (Lys-14) is an N6,N6,N6-trimethyllysine. Substrate is bound by residues Asn-123 and Thr-173. The active-site Proton acceptor is Lys-175. Position 177 (Lys-177) interacts with substrate. The Mg(2+) site is built by Lys-201, Asp-203, and Glu-204. Lys-201 carries the post-translational modification N6-carboxylysine. The active-site Proton acceptor is His-294. Substrate-binding residues include Arg-295, His-327, and Ser-379.

Belongs to the RuBisCO large chain family. Type I subfamily. Heterohexadecamer of 8 large chains and 8 small chains; disulfide-linked. The disulfide link is formed within the large subunit homodimers. Mg(2+) is required as a cofactor. The disulfide bond which can form in the large chain dimeric partners within the hexadecamer appears to be associated with oxidative stress and protein turnover.

Its subcellular location is the plastid. The protein localises to the chloroplast. It carries out the reaction 2 (2R)-3-phosphoglycerate + 2 H(+) = D-ribulose 1,5-bisphosphate + CO2 + H2O. The enzyme catalyses D-ribulose 1,5-bisphosphate + O2 = 2-phosphoglycolate + (2R)-3-phosphoglycerate + 2 H(+). Functionally, ruBisCO catalyzes two reactions: the carboxylation of D-ribulose 1,5-bisphosphate, the primary event in carbon dioxide fixation, as well as the oxidative fragmentation of the pentose substrate in the photorespiration process. Both reactions occur simultaneously and in competition at the same active site. In Flaveria pringlei, this protein is Ribulose bisphosphate carboxylase large chain.